Reading from the N-terminus, the 440-residue chain is tRNA-2-methylthio-N(6)-dimethylallyladenosine synthase (440 aa).

The 119-residue stretch at 4–122 (KSYYIITHGC…LPKILERVFE (119 aa)) folds into the MTTase N-terminal domain. [4Fe-4S] cluster contacts are provided by C13, C49, C83, C159, C163, and C166. In terms of domain architecture, Radical SAM core spans 145-375 (REPGVRAWVT…IELQNGISLE (231 aa)). The 63-residue stretch at 378 to 440 (KNEEGNIHEI…KLFHLEGVLV (63 aa)) folds into the TRAM domain.

It belongs to the methylthiotransferase family. MiaB subfamily. As to quaternary structure, monomer. It depends on [4Fe-4S] cluster as a cofactor.

The protein resides in the cytoplasm. It catalyses the reaction N(6)-dimethylallyladenosine(37) in tRNA + (sulfur carrier)-SH + AH2 + 2 S-adenosyl-L-methionine = 2-methylsulfanyl-N(6)-dimethylallyladenosine(37) in tRNA + (sulfur carrier)-H + 5'-deoxyadenosine + L-methionine + A + S-adenosyl-L-homocysteine + 2 H(+). In terms of biological role, catalyzes the methylthiolation of N6-(dimethylallyl)adenosine (i(6)A), leading to the formation of 2-methylthio-N6-(dimethylallyl)adenosine (ms(2)i(6)A) at position 37 in tRNAs that read codons beginning with uridine. This Carboxydothermus hydrogenoformans (strain ATCC BAA-161 / DSM 6008 / Z-2901) protein is tRNA-2-methylthio-N(6)-dimethylallyladenosine synthase.